The primary structure comprises 129 residues: Glycine cleavage system H protein (129 aa).

A Lipoyl-binding domain is found at 24–106; that stretch reads SYTVGITEHA…YGEGWFFRVM (83 aa). Lys-65 bears the N6-lipoyllysine mark.

Belongs to the GcvH family. The glycine cleavage system is composed of four proteins: P, T, L and H. It depends on (R)-lipoate as a cofactor.

Functionally, the glycine cleavage system catalyzes the degradation of glycine. The H protein shuttles the methylamine group of glycine from the P protein to the T protein. This is Glycine cleavage system H protein from Shewanella putrefaciens (strain CN-32 / ATCC BAA-453).